Reading from the N-terminus, the 84-residue chain is uncharacterized protein (84 aa).

The helical transmembrane segment at 13-35 (TTLVLTIISTTTTTLFAIIQLYL) threads the bilayer. A coiled-coil region spans residues 41–84 (LKDAVKEIVNSELSNLKTEIEELKIKQDELSRQVEEIKRKLDQK).

The protein localises to the host membrane. This is an uncharacterized protein from Sulfolobus islandicus rod-shaped virus 1 (SIRV-1).